Reading from the N-terminus, the 380-residue chain is Chorismate synthase (380 aa).

Arginine 49 is a binding site for NADP(+). FMN contacts are provided by residues glycine 288, 303–307 (KPPSS), and arginine 330.

The protein belongs to the chorismate synthase family. FMNH2 is required as a cofactor.

It catalyses the reaction 5-O-(1-carboxyvinyl)-3-phosphoshikimate = chorismate + phosphate. It participates in metabolic intermediate biosynthesis; chorismate biosynthesis; chorismate from D-erythrose 4-phosphate and phosphoenolpyruvate: step 7/7. In terms of biological role, catalyzes the anti-1,4-elimination of the C-3 phosphate and the C-6 proR hydrogen from 5-enolpyruvylshikimate-3-phosphate (EPSP) to yield chorismate, which is the branch point compound that serves as the starting substrate for the three terminal pathways of aromatic amino acid biosynthesis. This reaction introduces a second double bond into the aromatic ring system. The protein is Chorismate synthase of Aeropyrum pernix (strain ATCC 700893 / DSM 11879 / JCM 9820 / NBRC 100138 / K1).